A 1033-amino-acid polypeptide reads, in one-letter code: Tyrosine-protein kinase-like otk (1033 aa).

Residues 1–22 form the signal peptide; the sequence is MTARMISIYGLVLASMMASVWA. The Extracellular segment spans residues 23 to 581; sequence SSSRFQRLPQ…GGDGFLVTRA (559 aa). Ig-like C2-type domains lie at 25-108, 109-199, 251-365, 368-463, and 468-558; these read SRFQ…REAS, PPAK…RVMS, PEDL…LPIS, PGVL…VAIN, and PKFS…VQLV. A glycan (N-linked (GlcNAc...) asparagine) is linked at asparagine 39. 4 cysteine pairs are disulfide-bonded: cysteine 46/cysteine 95, cysteine 137/cysteine 188, cysteine 276/cysteine 354, and cysteine 399/cysteine 447. Residues asparagine 336, asparagine 417, asparagine 429, asparagine 444, asparagine 457, asparagine 512, and asparagine 524 are each glycosylated (N-linked (GlcNAc...) asparagine). A disulfide bridge connects residues cysteine 490 and cysteine 542. A helical membrane pass occupies residues 582–602; it reads VLITMTVALAYIVLVVGLMLW. At 603–1033 the chain is on the cytoplasmic side; that stretch reads CRYRRQARKA…LSKAMQSVEK (431 aa). 2 disordered regions span residues 617 to 679 and 718 to 760; these read LSTK…KKSA and SPTD…KTSM. Polar residues predominate over residues 655–673; it reads KSSGDAQKSDDTACSQQSR. The residue at position 678 (serine 678) is a Phosphoserine. One can recognise a Protein kinase; inactive domain in the interval 692-1028; that stretch reads LSELIQIGRG…QLGAALSKAM (337 aa). Basic and acidic residues predominate over residues 720-731; that stretch reads TDKDADTEKQHS.

The protein belongs to the protein kinase superfamily. Tyr protein kinase family. Insulin receptor subfamily. As to quaternary structure, interacts with plexA; component of a receptor complex that mediates the repulsive signaling in response to Semaphorin ligands.

It localises to the cell membrane. Acts as a calcium-dependent, homophilic cell adhesion molecule that regulates neural recognition during the development of the nervous system. Component of the repulsive Plexin signaling response to regulate motor axon guidance at the embryonic stage. Also component of a receptor complex that is required in the adult visual system to innervate the lamina layer; specific targeting of R1-R6 axons. This is Tyrosine-protein kinase-like otk from Drosophila erecta (Fruit fly).